A 599-amino-acid chain; its full sequence is MATLACVGAAAMACALAVYLGDTTKSMSYLSYSGTILFGCSGLWYVWKGLLWPAYFSPLRHLKTVPKSGWLSAETLRLYTEPRGVPQCEWINKLDSVPQGLVRYRSILGFERLLVVSPEALADVLVNRSYEFQKPAFVVTQLEQILGRGVLLAEGNEHRAQRRVLLPAFAFRHVKSLYPVMWSVAEHLITSMTENIRVESSASPTEPVFSSDEPQAKHKHEMITVNIADLCSRATLDIIGIAGIGQEFGAIRNPNNALHQTYCEIFQPSKEATLLGVLRLLLPIWFVDWLPSRRNARVQRAVQTIRSLCRQIIQEERLPQAVDESHSEVASTGKNILTLAIASGAFTDEALVDQIMTFLAAGHETTATALTWAIYIMCLHPGIQEKLRNEVRSRLPKLPSTYNSAPQNLAKTIDTGMPYLNAVCQEVFRYFPPIPVTFREATKNTFILNTAVPAGTKIVLAPRVTNRQSTLWGSNAQEFDPDRWLCLKKQDASIDDSSAASPSFGGSGKRKSQYTDTHKEPSTRSNFATMTFLHGPRSCIGQSFAKAELAILLAALVGRFEFKLARGTPEKEIDVRVSRGATARPEKGLFVQIRVIEGW.

Helical transmembrane passes span 4–21 and 36–56; these read LACVGAAAMACALAVYLG and ILFGCSGLWYVWKGLLWPAYF. N-linked (GlcNAc...) asparagine glycosylation occurs at N127. Residues 495–504 show a composition bias toward low complexity; sequence DDSSAASPSF. The segment at 495–522 is disordered; it reads DDSSAASPSFGGSGKRKSQYTDTHKEPS. Residue C539 participates in heme binding.

This sequence belongs to the cytochrome P450 family. Heme is required as a cofactor.

The protein localises to the membrane. The protein operates within secondary metabolite biosynthesis. Functionally, cytochrome P450 monooxygenase; part of the gene cluster that mediates the biosynthesis of the host-selective toxins (HSTs) AAL-toxins, sphinganine-analog mycotoxins responsible for Alternaria stem canker on tomato by the tomato pathotype. The biosynthesis starts with the polyketide synthase ALT1-catalyzed C-16 carbon chain assembly from one starter acetyl-CoA unit with malonyl-CoA extender units. ALT1 also selectively transfers methyl groups at the first and the third cycle of chain elongation for AAL toxin. The C-16 polyketide chain is released from the enzyme by a nucleophilic attack of a carbanion, which is derived from R-carbon of glycin by decarboxylation, on the carbonyl carbon of polyketide acyl chain. This step is probably catalyzed by a pyridoxal 5'-phosphate-dependent aminoacyl transferase ALT4. The respective functions of the other enzymes encoded by the cluster have still to be elucidated. The sphingosine N-acyltransferase-like protein ALT7 seems not to act as a resistance/self-tolerance factor against the toxin in the toxin biosynthetic gene cluster, contrary to what is expected. This chain is Cytochrome P450 monooxygenase ALT8, found in Alternaria alternata (Alternaria rot fungus).